Reading from the N-terminus, the 410-residue chain is Cysteine desulfurase IscS (410 aa).

Residues 80–81 (AT), asparagine 160, glutamine 188, and 208–210 (SGH) contribute to the pyridoxal 5'-phosphate site. Lysine 211 carries the N6-(pyridoxal phosphate)lysine modification. Threonine 248 is a pyridoxal 5'-phosphate binding site. The active-site Cysteine persulfide intermediate is cysteine 334. Cysteine 334 lines the [2Fe-2S] cluster pocket.

The protein belongs to the class-V pyridoxal-phosphate-dependent aminotransferase family. NifS/IscS subfamily. In terms of assembly, homodimer. Forms a heterotetramer with IscU, interacts with other sulfur acceptors. The cofactor is pyridoxal 5'-phosphate.

It is found in the cytoplasm. The catalysed reaction is (sulfur carrier)-H + L-cysteine = (sulfur carrier)-SH + L-alanine. Its pathway is cofactor biosynthesis; iron-sulfur cluster biosynthesis. In terms of biological role, master enzyme that delivers sulfur to a number of partners involved in Fe-S cluster assembly, tRNA modification or cofactor biosynthesis. Catalyzes the removal of elemental sulfur atoms from cysteine to produce alanine. Functions as a sulfur delivery protein for Fe-S cluster synthesis onto IscU, an Fe-S scaffold assembly protein, as well as other S acceptor proteins. The protein is Cysteine desulfurase IscS of Rickettsia massiliae (strain Mtu5).